The chain runs to 87 residues: MNSLLMITACLALIGTVWAKEGYIVNYHDGCKYECYKLGDNDYCLRECKLRYGKGAGGYCYAFGCWCTHLYEQAVVWPLPKKRCNGK.

The signal sequence occupies residues 1–19 (MNSLLMITACLALIGTVWA). Residues 20-85 (KEGYIVNYHD…VWPLPKKRCN (66 aa)) form the LCN-type CS-alpha/beta domain. Intrachain disulfides connect Cys31/Cys84, Cys35/Cys60, Cys44/Cys65, and Cys48/Cys67. Asn85 carries the asparagine amide modification.

This sequence belongs to the long (4 C-C) scorpion toxin superfamily. Sodium channel inhibitor family. Beta subfamily. As to expression, expressed by the venom gland.

It is found in the secreted. Beta toxins bind voltage-independently at site-4 of sodium channels (Nav) and shift the voltage of activation toward more negative potentials thereby affecting sodium channel activation and promoting spontaneous and repetitive firing. The sequence is that of Toxin Cll4 from Centruroides limpidus (Mexican scorpion).